Reading from the N-terminus, the 605-residue chain is Kelch-like protein 41b (605 aa).

Residues 32-102 (VDCTLKIGDR…YSAEIDLVDD (71 aa)) enclose the BTB domain. One can recognise a BACK domain in the interval 136-238 (CLAVFRLGLV…PEKYFREKVE (103 aa)). Kelch repeat units lie at residues 345–397 (QLFI…ESEN), 398–446 (LLFA…SHNN), 447–494 (LVYC…VHKG), 496–541 (IIVT…SSGG), and 543–598 (LFSI…MRLN).

The protein resides in the cytoplasm. The protein localises to the cytoskeleton. It is found in the sarcoplasmic reticulum membrane. Its subcellular location is the endoplasmic reticulum membrane. In terms of biological role, involved in skeletal muscle development and maintenance. In Danio rerio (Zebrafish), this protein is Kelch-like protein 41b.